A 40-amino-acid chain; its full sequence is Conotoxin Bt14.16 (40 aa).

The propeptide occupies 1-18 (SDGRDAAVIYTESDVIAR). Intrachain disulfides connect C21/C36 and C24/C29.

It belongs to the conotoxin A superfamily. In terms of tissue distribution, expressed by the venom duct.

Its subcellular location is the secreted. Probable neurotoxin with unknown target. Possibly targets ion channels. This Conus betulinus (Beech cone) protein is Conotoxin Bt14.16.